The following is a 183-amino-acid chain: (2E)-enoyl-[ACP] glycyltransferase (183 aa).

The protein belongs to the FcoT family.

The catalysed reaction is a (3R)-3-[(carboxymethyl)amino]fatty acid + holo-[ACP] + H(+) = a (2E)-enoyl-[ACP] + glycine + H2O. It carries out the reaction (3R)-3-[(carboxylmethyl)amino]decanoate + holo-[ACP] + H(+) = (2E)-decenoyl-[ACP] + glycine + H2O. It catalyses the reaction a fatty acyl-CoA + H2O = a fatty acid + CoA + H(+). In terms of biological role, involved in the biosynthesis of a unique class of isonitrile lipopeptides (INLPs) that seem to play a role in metal acquisition. Catalyzes a Michael addition of glycine to the beta-position of an alpha,beta-unsaturated fatty acyl-[ACP], producing a (3R)-3-[(carboxymethyl)amino]fatty acid. Acts on the (2E)-decenoyl moiety loaded on the acyl-carrier protein (ACP) BQ2027_MB0103, forming the product (3R)-3-[(carboxymethyl)amino]decanoate released from the ACP. Displays thioesterase activity with a preference for long chain fatty acyl groups. The chain is (2E)-enoyl-[ACP] glycyltransferase from Mycobacterium bovis (strain ATCC BAA-935 / AF2122/97).